We begin with the raw amino-acid sequence, 1321 residues long: MQKIKEGYRRRHDYIIPKFISFQSGYLDFSFYQVSLKNVKYLDLSSYYQLHAPRRFRKIVEYLNLSYGQLLTLGTLPKYVMSLDLSSYNQLFTPGRLPIRVSLDLSSYNQLFTPGRLPDTVDYLKLSSYNQLFTPGTLPNHMVYLNLSSYNQPLTPGTLPNKVKYLVLSSYNQLLTPGTLPNNVKYVDLSSYNKLLTPETLPNKVKYLVLSSYDQLLTPGTLPNNVKCVDLSSYDKLLTPGTLPNNVKYVDLSSYNKLLTPRTLPNNVECLVLSSYNQLLTPGILPNYVKYLDISSYNQLLTPGTLSNNVEYLDLSSYNQVLAPKTIPNNVKCLDCPSYKQSLISETFPNRVGDLELSDHPKHVNDNWEIIKPQKNISENKVYYTTKHKNAKIIDVLNICKCSLKLYGYVKDRNNEFNIYFEYIDKAIPLSRLLEKLNKKEQFIVATEIIKSIKSIHEMGIIHFDIKCQNILILYDENEKMLPTDFIKIIGFDHSTLDSEVNSNIIGVTETHMAPEIKLKNGKLGYKSDIWSLGCTLIEIVGGNLKLLDINGIPLIPDHLSNLFKNTIQHCLQINPNARFNANELYNYVIKDSIMEPIEPIYLPNQCTNLPLFNEVIVPSGFFGIKYLELQAYNQPIDSIFIFNGVEYLILQSFNHPLGPGILPESIKYLKLPSFNHPLKEGSIPRSVIHLVFNKFNQFSLDEINLILPKFLDFGDAFDIEKYGILIPEDSILTLRTGFTFNQPINQRYIPSSVTDLQLYNYNLKILPHSIPRSIIMLTLGSNFTHFESLSNLPSSIINLTFGFKNNFKIAELKKYIPSHITSININGKIVNFKKSSPLNTFNQSTDNILNNNEHFKEDWEIISTLGSGNFGKVFKARKINGIINGSKVSLCAIKKIEKKDKLKIKLSTEVEILNKLKDNEHSMKYYGYGYDEDDNLFIYTEYIEGSTSISDLIKKKPNNRFEEEEIKSLMIKIVKALSKIHESGVIHRDIKSDHIILAQDKNNETIVKFIDFGLSKQIEKNSKYYSFVGTDSHMAPEVKLQNGKAGSKSDIFCIGCTMIEMAGLNLCHSERDDKGIPSIPTHLSNSFKNIIQNCLKFDTNARHSVESLIITLSNIQIEGDSVFEKYLSPNLKKLELKTNEPILLGSIGNEINYLSLPIYNQMITPGALPPSVQYLLFNKLNQYLECDSIPESVKYLDLGNEFDIEKNGINLSNESILVLRCGFNFTQPVSQRLLPYSVTDLQLYNYNINLKRNSIPTLVTSLTLGSNFTNIESLSFLPENVNSLAIGIKDEDEKLTKEIEKIIQTKKSITSFKINGIQRN.

FNIP repeat units follow at residues 108–149 (YNQL…NLSS), 150–191 (YNQP…DLSS), 192–233 (YNKL…DLSS), and 255–296 (YNKL…DISS). One can recognise a Protein kinase 1 domain in the interval 295–595 (SSYNQLLTPG…YNYVIKDSIM (301 aa)). ATP is bound by residues 301-309 (LTPGTLSNN) and Lys-325. Asp-465 serves as the catalytic Proton acceptor. FNIP repeat units lie at residues 654–696 (FNHP…FNKF) and 741–783 (FNQP…LGSN). Positions 860 to 1128 (WEIISTLGSG…EGDSVFEKYL (269 aa)) constitute a Protein kinase 2 domain. Residues 866–874 (LGSGNFGKV) and Lys-895 each bind ATP. The Proton acceptor role is filled by Asp-990. FNIP repeat units lie at residues 1160 to 1202 (YNQM…LGNE) and 1224 to 1268 (FNFT…LGSN).

The protein belongs to the protein kinase superfamily. STE Ser/Thr protein kinase family. The cofactor is Mg(2+).

The enzyme catalyses L-seryl-[protein] + ATP = O-phospho-L-seryl-[protein] + ADP + H(+). It catalyses the reaction L-threonyl-[protein] + ATP = O-phospho-L-threonyl-[protein] + ADP + H(+). The protein is Probable serine/threonine-protein kinase fnkE of Dictyostelium discoideum (Social amoeba).